A 556-amino-acid polypeptide reads, in one-letter code: Arginine--tRNA ligase (556 aa).

The 'HIGH' region motif lies at 132 to 142 (ANPTGDLHLGH).

The protein belongs to the class-I aminoacyl-tRNA synthetase family. Monomer.

It localises to the cytoplasm. It carries out the reaction tRNA(Arg) + L-arginine + ATP = L-arginyl-tRNA(Arg) + AMP + diphosphate. This is Arginine--tRNA ligase from Listeria monocytogenes serotype 4a (strain HCC23).